The following is a 149-amino-acid chain: uncharacterized protein (149 aa).

The region spanning 1 to 149 is the N-acetyltransferase domain; the sequence is MNIRQAKTSD…VHYCLNVPAK (149 aa).

This sequence belongs to the acetyltransferase family.

This is an uncharacterized protein from Bacillus subtilis (strain 168).